The following is a 513-amino-acid chain: Histidine ammonia-lyase (513 aa).

Positions 144-146 (ASG) form a cross-link, 5-imidazolinone (Ala-Gly). At S145 the chain carries 2,3-didehydroalanine (Ser).

The protein belongs to the PAL/histidase family. Contains an active site 4-methylidene-imidazol-5-one (MIO), which is formed autocatalytically by cyclization and dehydration of residues Ala-Ser-Gly.

The protein resides in the cytoplasm. The enzyme catalyses L-histidine = trans-urocanate + NH4(+). Its pathway is amino-acid degradation; L-histidine degradation into L-glutamate; N-formimidoyl-L-glutamate from L-histidine: step 1/3. The polypeptide is Histidine ammonia-lyase (Streptococcus pyogenes serotype M49 (strain NZ131)).